The primary structure comprises 185 residues: ATP synthase subunit delta, chloroplastic (185 aa).

This sequence belongs to the ATPase delta chain family. As to quaternary structure, F-type ATPases have 2 components, F(1) - the catalytic core - and F(0) - the membrane proton channel. F(1) has five subunits: alpha(3), beta(3), gamma(1), delta(1), epsilon(1). CF(0) has four main subunits: a(1), b(1), b'(1) and c(10-14). The alpha and beta chains form an alternating ring which encloses part of the gamma chain. F(1) is attached to F(0) by a central stalk formed by the gamma and epsilon chains, while a peripheral stalk is formed by the delta, b and b' chains.

The protein resides in the plastid. It localises to the chloroplast thylakoid membrane. Its function is as follows. F(1)F(0) ATP synthase produces ATP from ADP in the presence of a proton or sodium gradient. F-type ATPases consist of two structural domains, F(1) containing the extramembraneous catalytic core and F(0) containing the membrane proton channel, linked together by a central stalk and a peripheral stalk. During catalysis, ATP synthesis in the catalytic domain of F(1) is coupled via a rotary mechanism of the central stalk subunits to proton translocation. In terms of biological role, this protein is part of the stalk that links CF(0) to CF(1). It either transmits conformational changes from CF(0) to CF(1) or is implicated in proton conduction. This is ATP synthase subunit delta, chloroplastic from Guillardia theta (Cryptophyte).